Here is a 756-residue protein sequence, read N- to C-terminus: MAIVGGLVDVPFENKVEFDDLARFAVQDYNQKNDSSLEFKKVLNVKQQIVAGIMYYITFEATEGGNKKEYEAKILLRKWEDLKKVVGFKLVGDDSTMPGGIVNVPNPNNTKFQELARFAIQDYNKKQNAHLEFVENLNVKEQVVAGIMYYITLAATDDAGKKKIYKAKIWVKEWEDFKKVVEFKLVGDDIAKLGGITDVPFPNNPEFQDLARFAIQVYNKKENVHLEFVENLNVKQQVVAGMMYYITLAAIDAGKKKIYETKIWVKEWEDFKKVVEFKLVGDDSAKTGGIINVPNPNSPEFQDLARFAVQDYNNTQNAHLEFVENLNVKEQLVSGMMYYITLAATDAGNKKEYEAKIWVKEWEDFKKVIDFKLVGNDSAKKLGGFTEVPFPNSPEFQDLTRFAVHQYNKDQNAHLEFVENLNVKKQVVAGMLYYITFAATDGGKKKIYETKIWVKVWENFKKVVEFKLVGDDSAKLGGIINVPFPNNPEFQDLARFAVQDYNKKENAHLEFVENLNVKEQLVAGMLYYITLVAIDAGKKKIYEAKIWVKEWENFKKVIEFKLIGDDSAIIGGFTDVPFPNNPEFQDLARFAVQDYNKKENAHLEYVENLNVKEQLVAGMIYYITLVATDAGKKKIYEAKIWVKEWEDFKKVVEFKLVGDDSAKPGGIIIVPFPNSPEFQDLARFAVQDFNKKENGHLEFVENLNVKEQVVAGMMYYITLAATDARKKEIYETKILVKEWENFKEVQEFKLVGDATK.

Cystatin domains are found at residues 3 to 96 (IVGG…DDST), 97 to 191 (MPGG…DDIA), 192 to 285 (KLGG…DDSA), 286 to 380 (KTGG…DSAK), 381 to 474 (KLGG…DDSA), 475 to 568 (KLGG…DDSA), 569 to 662 (IIGG…DDSA), and 663 to 756 (KPGG…DATK). 8 consecutive short sequence motifs (secondary area of contact) follow at residues 48–52 (QIVAG), 142–146 (QVVAG), 237–241 (QVVAG), 331–335 (QLVSG), 426–430 (QVVAG), 520–524 (QLVAG), 614–618 (QLVAG), and 708–712 (QVVAG).

Belongs to the cystatin family. Phytocystatin subfamily. In terms of tissue distribution, expressed abundantly in tuber and leaf.

Functionally, probably has a role in the plant's defense system. The chain is Multicystatin from Solanum tuberosum (Potato).